The sequence spans 31 residues: Bacteriocin leucocin-B (31 aa).

Its subcellular location is the secreted. In terms of biological role, inhibits a wide spectrum of lactic acid bacteria. This is Bacteriocin leucocin-B from Leuconostoc mesenteroides.